The chain runs to 556 residues: Glucomannan 4-beta-mannosyltransferase 7 (556 aa).

The chain crosses the membrane as a helical span at residues 58-78 (VVVPVFKFLVLLCLVMSVMFF). Aspartate 158 is an active-site residue. Substrate contacts are provided by aspartate 217 and aspartate 219. Aspartate 311 is a catalytic residue. 4 consecutive transmembrane segments (helical) span residues 390-410 (IVAH…TVLF), 426-448 (LITL…WVLF), 502-522 (LLEL…IVYG), and 526-546 (LYVY…GFVG).

It belongs to the glycosyltransferase 2 family. Plant cellulose synthase-like A subfamily. In terms of tissue distribution, ubiquitous.

The protein resides in the golgi apparatus membrane. It catalyses the reaction GDP-mannose + (glucomannan)n = GDP + (glucomannan)n+1.. Functionally, probable mannan synthase which consists of a 4-beta-mannosyltransferase activity on mannan using GDP-mannose. The beta-1,4-mannan product is the backbone for galactomannan synthesis by galactomannan galactosyltransferase. Galactomannan is a noncellulosic polysaccharides of plant cell wall. Required for synthesis of a cell wall polysaccharide essential for pollen tube growth, for cell wall structure, or for signaling during plant embryo development. The protein is Glucomannan 4-beta-mannosyltransferase 7 of Arabidopsis thaliana (Mouse-ear cress).